The primary structure comprises 42 residues: Photosystem I reaction center subunit IX (42 aa).

Residues 7-27 (YLSAAPVLSTLWLGALAGLLI) form a helical membrane-spanning segment.

The protein belongs to the PsaJ family.

The protein localises to the plastid membrane. Its function is as follows. May help in the organization of the PsaE and PsaF subunits. This chain is Photosystem I reaction center subunit IX, found in Cuscuta exaltata (Tall dodder).